The sequence spans 228 residues: UPF0758 protein MW1604 (228 aa).

The 123-residue stretch at 102 to 224 (KITQPSDVAD…FTSLVEAGYF (123 aa)) folds into the MPN domain. 3 residues coordinate Zn(2+): His173, His175, and Asp186. Positions 173–186 (HNHPSGDVTPSQED) match the JAMM motif motif.

The protein belongs to the UPF0758 family.

The polypeptide is UPF0758 protein MW1604 (Staphylococcus aureus (strain MW2)).